A 493-amino-acid polypeptide reads, in one-letter code: Alcohol-forming fatty acyl-CoA reductase (493 aa).

This sequence belongs to the fatty acyl-CoA reductase family.

It catalyses the reaction a long-chain fatty acyl-CoA + 2 NADPH + 2 H(+) = a long-chain primary fatty alcohol + 2 NADP(+) + CoA. In terms of biological role, NADPH-dependent alcohol-forming fatty acyl-coenzyme A reductase that catalyzes the reduction of fatty acyl-CoA to fatty alcohols. The recombinant enzyme accepts saturated and mono-unsaturated fatty acyl-CoAs of 16 to 22 carbons. The chain is Alcohol-forming fatty acyl-CoA reductase from Simmondsia chinensis (Jojoba).